The primary structure comprises 266 residues: Proteasome subunit alpha type-1 (266 aa).

Residues 235–266 (DGFKTRPEDIPAVADNEEDDDELHEQPPDVEE) form a disordered region. Acidic residues predominate over residues 249–266 (DNEEDDDELHEQPPDVEE).

It belongs to the peptidase T1A family. In terms of assembly, the 26S proteasome consists of a 20S proteasome core and two 19S regulatory subunits. The 20S proteasome core is composed of 28 subunits that are arranged in four stacked rings, resulting in a barrel-shaped structure. The two end rings are each formed by seven alpha subunits, and the two central rings are each formed by seven beta subunits. The catalytic chamber with the active sites is on the inside of the barrel.

Its subcellular location is the cytoplasm. The protein resides in the nucleus. Its function is as follows. The proteasome is a multicatalytic proteinase complex which is characterized by its ability to cleave peptides with Arg, Phe, Tyr, Leu, and Glu adjacent to the leaving group at neutral or slightly basic pH. The proteasome has an ATP-dependent proteolytic activity. The sequence is that of Proteasome subunit alpha type-1 from Trypanosoma brucei rhodesiense.